The primary structure comprises 459 residues: Palmitoyltransferase PFA4 (459 aa).

Residues 1-9 (MAARNWSRV) lie on the Cytoplasmic side of the membrane. A helical transmembrane segment spans residues 10–30 (WVGGTVILISFIAFSSQIFVI). At 31-37 (WPWYGRE) the chain is on the lumenal side. A helical transmembrane segment spans residues 38–58 (ISLDLLKLLVPLNLAAFMIFW). Residues 59–138 (NYRLCVITSP…GNCVGFYNQG (80 aa)) lie on the Cytoplasmic side of the membrane. Residues 95 to 145 (RYCKNCEHYKPPRAHHCRQCKTCWLKLDHHCPWIGNCVGFYNQGHFIRFLL) form the DHHC domain. Cysteine 125 functions as the S-palmitoyl cysteine intermediate in the catalytic mechanism. The helical transmembrane segment at 139–159 (HFIRFLLWVDIGTTFHLIIMV) threads the bilayer. The Lumenal segment spans residues 160-177 (RRVLYIAEYYHQEPTLAD). Residues 178–198 (VLFLVFNFATCVPVWLCVGMF) form a helical membrane-spanning segment. Topologically, residues 199 to 459 (SIYHVYLACG…DTEEESGYAH (261 aa)) are cytoplasmic. A disordered region spans residues 278–379 (HTTQYFWPPQ…DYDHYDEGPM (102 aa)). Residues 286 to 299 (PQDPSRLPNPPPIP) show a composition bias toward pro residues. The segment covering 310–322 (NGFNPNLQPTNSL) has biased composition (polar residues). The segment covering 331 to 356 (HIDEDEHSHERDQYRHYSSGEERDND) has biased composition (basic and acidic residues).

The protein belongs to the DHHC palmitoyltransferase family. PFA4 subfamily.

The protein localises to the endoplasmic reticulum membrane. The catalysed reaction is L-cysteinyl-[protein] + hexadecanoyl-CoA = S-hexadecanoyl-L-cysteinyl-[protein] + CoA. Mediates the reversible addition of palmitate to target proteins, thereby regulating their membrane association and biological function. The sequence is that of Palmitoyltransferase PFA4 from Cryptococcus neoformans var. neoformans serotype D (strain B-3501A) (Filobasidiella neoformans).